We begin with the raw amino-acid sequence, 544 residues long: Potential vesicular glutamate transporter vglu-3 (544 aa).

The Cytoplasmic portion of the chain corresponds to 1–49 (MPNGSIRNCANAVADTVRQTFSRKTWEHKEQLQTITEQKKFFLRKVRWQ). A helical transmembrane segment spans residues 50 to 70 (IAILAHFGFAISFGIRSNFGV). Residues 71 to 104 (AKNRMVNNFTDAYGEVHEREFLWTGAEVGMMESS) lie on the Extracellular side of the membrane. Residue asparagine 78 is glycosylated (N-linked (GlcNAc...) asparagine). The chain crosses the membrane as a helical span at residues 105–125 (FFYGYAASQIPAGVLAAKFAP). At 126–127 (NK) the chain is on the cytoplasmic side. The chain crosses the membrane as a helical span at residues 128-148 (IFMLGILVASFMNILSAISFN). The Extracellular segment spans residues 149 to 154 (FHPYTD). Residues 155–175 (IFVMVVQAVQGLALGVLYPAM) form a helical membrane-spanning segment. Topologically, residues 176–193 (HGVWKFWAPPLERSKLAT) are cytoplasmic. Residues 194-214 (TAFTGSSVGVMTGLPASAYLV) form a helical membrane-spanning segment. The Extracellular segment spans residues 215–219 (SHFSW). A helical membrane pass occupies residues 220–240 (STPFYVFGVVGIIWSLIWMYV). Residues 241-285 (SSHSPETHGYISDDEKKQVTEKIGDVAVKNMSLTTLPWRDMMTSS) are Cytoplasmic-facing. A helical transmembrane segment spans residues 286 to 306 (AVWAIIICTFCRSWGFFLLLG). The Extracellular portion of the chain corresponds to 307–323 (NQLTYMKDVLHIDIKNS). A helical membrane pass occupies residues 324–344 (GFISIFPQFGMCIVTLATGQL). The Cytoplasmic segment spans residues 345-360 (CDYLRSSGKMSTEAVR). The chain crosses the membrane as a helical span at residues 361–381 (KSVNTFGFTVEAMMLGCLAFV). Topologically, residues 382–384 (RDP) are extracellular. Residues 385–405 (VIAVTCLVIACTGSGSVLSGF) form a helical membrane-spanning segment. Over 406 to 416 (NVNHFDIAPRY) the chain is Cytoplasmic. The helical transmembrane segment at 417–437 (APILMGIANGLGAVAGVGGMV) threads the bilayer. Residues 438–450 (TNTVTYQNPDGWK) are Extracellular-facing. A helical transmembrane segment spans residues 451-471 (WVFLLAMAIDIFGVIFFLIFA). At 472–544 (KGDVLPWARE…APAEKSESSS (73 aa)) the chain is on the cytoplasmic side. The interval 501-544 (SLSRKTRNREGDTSYEKMEEDSEMKPCSKKVEARAPAEKSESSS) is disordered. Positions 508 to 544 (NREGDTSYEKMEEDSEMKPCSKKVEARAPAEKSESSS) are enriched in basic and acidic residues.

Belongs to the major facilitator superfamily. Sodium/anion cotransporter family. VGLUT subfamily.

The protein localises to the membrane. This is Potential vesicular glutamate transporter vglu-3 (vglu-3) from Caenorhabditis elegans.